Consider the following 1256-residue polypeptide: MRRSNKKSFDWYGTKQQFSIRKYHFGAASVLLGVSLVLGAGAQVVKADETVASSEPTIASSVAPASTEAVAEEAEKTNAENTSAVATTSTEVEKAKAVLEQVTSESPLLAGLGQKELAKTEDATLAKAIEDAQTKLAAAKAILADSEATVEQVEAQVAAVKVANEALGNELQKYTVDGLLTAALDTVAPDTTASTLKVGDGEGTLLDSTTTATPSMAEPNGAAIAPHTLRTQDGIKATSEPNWYTFESYDLYSYNKNMASSTYKGAEVDAYIRYSLDNDSSTTAVLAELVSRTTGDVLEKYTIEPGESVTFSHPTKVNANNSNITVTYDTSLASANTPGALKFSANDDVYSTIIVPAYQINTTRYVTESGKVLATYGLQTIAGQVVTPSSVRVFTGYDYVATTTKAVQGPYPKGTVYLAGTVQKDTVQYKVIREIVENDQAVLKFYYLDPTYKGEVDWRGTDTTGFIELLTTSPTTYKVGTIYDYNINSKITAPFTIDPTKNVMVFKESEQNEQGSKYRVIAQWSGDETTKGIYGKIYIATQVWTTKLGTNEWGWFDYSDDQAGIKFNNKGFWPAGVQNTLRNATPATAVETTYIYKESSKYGDVIVEYYDTDGKQIVNSVVDTPKSALGTEYNTDVDRRPASLVAADGTVYFYKEVKSDSAKTTGTVVAGTTTVKYVYEKAGSVNVNFVDINGKVIKAPVSDEKDAKPGYNYDTDLDQKLASITFEGKEYKLVPAGDYPVGKVGKGNNLIEVGNNTAKGIDPTTGKIEAGVNKEVTYVYRAVTGSVVVNYKDTEGNVIKDPETDVSDAPVGDAYTTTDKKPNEIITKDGSRYVLVPSKTDGEENGKVIEGTITVTYVYQKVANWIPEIPNVPETDRPKVPYPFDPTEPDEPIDPTTPGTNGEVPNIPYVPGYTPVDPKDNTPLKPIDPNDPGKGYVPPTPENPGVDTPIPYVPVKKVVTNHVDEEGNPIAPQEEGTKPNKSIPGYEFTGKTVTDEDGNTTHIYKKTPEVKNGTVVVNYVTEDGTVIKEPVTDTPTSPEGTPYDTTDNKPKTITFKGEEYELVRVDGTENGKVVEGETVVTYVYRKVETPAKKVVTNHVDEEGNPVAPQEEGTKPNKSIPGYEFTGKTVTDEDGNTTHIYKKTPAKKVVTNHVDEEGNPIAPQEDGTTPKRQISGYEYVRTVVDEEGNTTHIYRKLSNKPTTPEKETPAKPQAGKTASGKAQLPNTGEASSVAGALGTAMLVATLAFARKRRRNED.

A signal peptide spans 1–47 (MRRSNKKSFDWYGTKQQFSIRKYHFGAASVLLGVSLVLGAGAQVVKA). 2 Small repeats span residues 663–681 (KTTG…VYEK) and 839–861 (KTDG…VYQK). Disordered stretches follow at residues 873-949 (PETD…VDTP), 967-994 (GNPI…KTVT), and 1028-1049 (KEPV…TDNK). The Large repeat unit spans residues 953-1006 (VPVKKVVTNHVDEEGNPIAPQEEGTKPNKSIPGYEFTGKTVTDEDGNTTHIYKK). Positions 1033-1045 (DTPTSPEGTPYDT) are enriched in polar residues. The Small repeat unit spans residues 1064 to 1084 (RVDGTENGKVVEGETVVTYVY). Large repeat units follow at residues 1089–1142 (TPAK…IYKK) and 1143–1195 (TPAK…IYRK). Residues 1102–1137 (EGNPVAPQEEGTKPNKSIPGYEFTGKTVTDEDGNTT) form a disordered region. The segment at 1196–1229 (LSNKPTTPEKETPAKPQAGKTASGKAQLPNTGEA) is disordered. The short motif at 1223–1227 (LPNTG) is the LPXTG sorting signal element. Residue T1226 is modified to Pentaglycyl murein peptidoglycan amidated threonine. The propeptide at 1227 to 1256 (GEASSVAGALGTAMLVATLAFARKRRRNED) is removed by sortase.

Its subcellular location is the secreted. The protein localises to the cell wall. The protein is Muramidase-released protein (mrp) of Streptococcus suis.